A 928-amino-acid chain; its full sequence is MORC family CW-type zinc finger protein 4 (928 aa).

The CW-type zinc finger occupies 417-469 (RIPDQTWVQCDECLKWRRLPGMVDPSTLPARWFCYYNPHPKFKRCSVPEEQER). Zn(2+) is bound by residues cysteine 426, cysteine 429, cysteine 450, and cysteine 461. 4 disordered regions span residues 474 to 510 (LHRS…TPPL), 527 to 546 (NSPS…PRLK), 599 to 649 (AYPE…DQDQ), and 718 to 766 (RAES…LKRT). Basic and acidic residues predominate over residues 485–497 (AAEKKQKPMESDK). Composition is skewed to basic and acidic residues over residues 626–636 (ESNKHTEENRE), 739–748 (KGKDCQDSRS), and 756–766 (TPKESEELKRT). The stretch at 758-867 (KESEELKRTT…LEVLQKAQVS (110 aa)) forms a coiled coil.

It is found in the nucleus. Functionally, histone methylation reader which binds to non-methylated (H3K4me0), monomethylated (H3K4me1), dimethylated (H3K4me2) and trimethylated (H3K4me3) 'Lys-4' on histone H3. The order of binding preference is H3K4me3 &gt; H3K4me2 &gt; H3K4me1 &gt; H3K4me0. This Mus musculus (Mouse) protein is MORC family CW-type zinc finger protein 4 (Morc4).